Reading from the N-terminus, the 324-residue chain is Proto-oncogene Mas (324 aa).

The Extracellular portion of the chain corresponds to 1 to 35 (MDQSNMTSFAEEKAMNTSSRNASLGTSHPPIPIVH). N-linked (GlcNAc...) asparagine glycans are attached at residues Asn-5, Asn-16, and Asn-21. Residues 36–60 (WVIMSISPLGFVENGILLWFLCFRM) traverse the membrane as a helical segment. Over 61–64 (RRNP) the chain is Cytoplasmic. The chain crosses the membrane as a helical span at residues 65-86 (FTVYITHLSIADISLLFCIFIL). The Extracellular portion of the chain corresponds to 87–103 (SIDYALDYELSSGHYYT). The helical transmembrane segment at 104-127 (IVTLSVTFLFGYNTGLYLLTAISV) threads the bilayer. The Cytoplasmic portion of the chain corresponds to 128–148 (ERCLSVLYPIWYRCHRPKHQS). Residues 149 to 171 (AFVCALLWALSCLVTTMEYVMCI) form a helical membrane-spanning segment. The Extracellular segment spans residues 172–184 (DSGEESHSQSDCR). Residues 185–205 (AVIIFIAILSFLVFTPLMLVS) form a helical membrane-spanning segment. Residues 206–223 (STILVVKIRKNTWASHSS) are Cytoplasmic-facing. A helical membrane pass occupies residues 224–244 (KLYIVIMVTIIIFLIFAMPMR). Residues 245-262 (VLYLLYYEYWSTFGNLHN) are Extracellular-facing. A helical transmembrane segment spans residues 263–283 (ISLLFSTINSSANPFIYFFVG). The Cytoplasmic segment spans residues 284–324 (SSKKKRFRESLKVVLTRAFKDEMQPRRQEGNGNTVSIETVV).

This sequence belongs to the G-protein coupled receptor 1 family. In terms of assembly, interacts with AGTR1. Interacts with FLNA (via filamin repeat 21); increases PKA-mediated phosphorylation of FLNA. As to expression, expressed in platelets.

It localises to the cell membrane. Receptor for angiotensin 1-7. Acts specifically as a functional antagonist of AGTR1 (angiotensin-2 type 1 receptor), although it up-regulates AGTR1 receptor levels. Positive regulation of AGTR1 levels occurs through activation of the G-proteins GNA11 and GNAQ, and stimulation of the protein kinase C signaling cascade. The antagonist effect on AGTR1 function is probably due to AGTR1 being physically altered by MAS1. The polypeptide is Proto-oncogene Mas (Mas1) (Rattus norvegicus (Rat)).